The primary structure comprises 396 residues: Dual specificity mitogen-activated protein kinase kinase dSOR1 (396 aa).

The disordered stretch occupies residues A25–K44. The Protein kinase domain maps to L87 to I364. Residues L93–V101 and K116 contribute to the ATP site. D209 serves as the catalytic Proton acceptor. A phosphoserine; by RAF mark is found at S237 and S241.

It belongs to the protein kinase superfamily. STE Ser/Thr protein kinase family. MAP kinase kinase subfamily. Interacts with Raf and ksr; Dsor1 binding to ksr probably promotes ksr and Raf dimerization and ksr-mediated Raf transactivation. Phosphorylation on Ser/Thr by MAP kinase kinase kinases regulates positively the kinase activity.

It carries out the reaction L-seryl-[protein] + ATP = O-phospho-L-seryl-[protein] + ADP + H(+). The enzyme catalyses L-threonyl-[protein] + ATP = O-phospho-L-threonyl-[protein] + ADP + H(+). The catalysed reaction is L-tyrosyl-[protein] + ATP = O-phospho-L-tyrosyl-[protein] + ADP + H(+). In terms of biological role, required downstream of Raf in the sevenless (sev), torso (tor), and Drosophila EGF receptor homolog (DER) signal transduction pathways. Involved in both positive regulation (at the posterior terminus) and negative regulation (at the anterior domain) of tll, as in other terminal class gene products, maybe via the ERK-A kinase. In Drosophila melanogaster (Fruit fly), this protein is Dual specificity mitogen-activated protein kinase kinase dSOR1 (Dsor1).